The primary structure comprises 177 residues: Large ribosomal subunit protein uL6 (177 aa).

This sequence belongs to the universal ribosomal protein uL6 family. Part of the 50S ribosomal subunit.

Functionally, this protein binds to the 23S rRNA, and is important in its secondary structure. It is located near the subunit interface in the base of the L7/L12 stalk, and near the tRNA binding site of the peptidyltransferase center. The chain is Large ribosomal subunit protein uL6 from Rhodospirillum rubrum (strain ATCC 11170 / ATH 1.1.1 / DSM 467 / LMG 4362 / NCIMB 8255 / S1).